A 111-amino-acid chain; its full sequence is BET1-like protein (111 aa).

Residues 1 to 86 are Cytoplasmic-facing; sequence MADWTRAQSS…VARSGRDTRK (86 aa). A phosphoserine mark is found at Ser9 and Ser37. One can recognise a t-SNARE coiled-coil homology domain in the interval 15-77; the sequence is EIVDRENKRM…TGSVKRFSTV (63 aa). The chain crosses the membrane as a helical; Anchor for type IV membrane protein span at residues 87–107; that stretch reads LLCGMAVVLIVAFFILSYLFS. The Vesicular portion of the chain corresponds to 108–111; that stretch reads RTRT.

In terms of assembly, component of a SNARE complex consisting of STX5, YKT6, GOSR1 and BET1L. Interacts with STX5. Widely expressed. Highest levels in heart, liver, skeletal muscle and kidney.

The protein resides in the golgi apparatus membrane. It is found in the golgi apparatus. The protein localises to the trans-Golgi network membrane. In terms of biological role, vesicle SNARE required for targeting and fusion of retrograde transport vesicles with the Golgi complex. Required for the integrity of the Golgi complex. This chain is BET1-like protein, found in Rattus norvegicus (Rat).